The chain runs to 657 residues: Probable potassium transport system protein Kup 1 (657 aa).

12 consecutive transmembrane segments (helical) span residues 40–60 (VTSG…GDIG), 88–108 (VLSL…VLLL), 135–155 (WFLL…SMIT), 172–192 (PALE…LFAV), 198–218 (ALVA…IAVM), 241–261 (FLLS…LAVT), 282–302 (WMFF…ALVL), 320–340 (LVLP…QAVI), 380–400 (LLLI…NLAS), 402–422 (YGIA…VVIW), 432–452 (AAAV…ANLL), and 454–474 (LLEG…TIWT).

Belongs to the HAK/KUP transporter (TC 2.A.72) family.

It is found in the cell inner membrane. It carries out the reaction K(+)(in) + H(+)(in) = K(+)(out) + H(+)(out). Functionally, transport of potassium into the cell. Likely operates as a K(+):H(+) symporter. This Bradyrhizobium diazoefficiens (strain JCM 10833 / BCRC 13528 / IAM 13628 / NBRC 14792 / USDA 110) protein is Probable potassium transport system protein Kup 1.